The primary structure comprises 637 residues: Chaperone protein HtpG (637 aa).

Residues 1 to 347 form an a; substrate-binding region; it reads MTQSVHAETH…SNDLPLNVSR (347 aa). The b stretch occupies residues 348–564; the sequence is EILQDNKVTV…NHGMSTQMIK (217 aa). A c region spans residues 565–637; that stretch reads LMRAAGQPVP…SRINRLLLQA (73 aa).

This sequence belongs to the heat shock protein 90 family. As to quaternary structure, homodimer.

The protein localises to the cytoplasm. Its function is as follows. Molecular chaperone. Has ATPase activity. This Aeromonas salmonicida (strain A449) protein is Chaperone protein HtpG.